Consider the following 51-residue polypeptide: Sperm protamine P1 (51 aa).

The protein belongs to the protamine P1 family. In terms of assembly, cross-linked by interchain disulfide bonds around the DNA-helix. Testis.

The protein resides in the nucleus. The protein localises to the chromosome. Its function is as follows. Protamines substitute for histones in the chromatin of sperm during the haploid phase of spermatogenesis. They compact sperm DNA into a highly condensed, stable and inactive complex. In Pongo pygmaeus (Bornean orangutan), this protein is Sperm protamine P1 (PRM1).